A 543-amino-acid polypeptide reads, in one-letter code: CTP synthase (543 aa).

Positions 1 to 265 (MARYIFITGG…DGEVLRHFGL (265 aa)) are amidoligase domain. Serine 13 provides a ligand contact to CTP. UTP is bound at residue serine 13. 14 to 19 (SLGKGL) contacts ATP. Tyrosine 54 lines the L-glutamine pocket. Aspartate 71 serves as a coordination point for ATP. 2 residues coordinate Mg(2+): aspartate 71 and glutamate 139. CTP contacts are provided by residues 146–148 (DIE), 186–191 (KTKPTQ), and lysine 222. UTP is bound by residues 186–191 (KTKPTQ) and lysine 222. Residues 290-542 (TIGVVGKYVG…IAAAVKQARL (253 aa)) enclose the Glutamine amidotransferase type-1 domain. L-glutamine is bound at residue glycine 354. The active-site Nucleophile; for glutamine hydrolysis is the cysteine 381. L-glutamine contacts are provided by residues 382 to 385 (LGMQ), glutamate 405, and arginine 470. Active-site residues include histidine 515 and glutamate 517.

It belongs to the CTP synthase family. In terms of assembly, homotetramer.

The enzyme catalyses UTP + L-glutamine + ATP + H2O = CTP + L-glutamate + ADP + phosphate + 2 H(+). It catalyses the reaction L-glutamine + H2O = L-glutamate + NH4(+). The catalysed reaction is UTP + NH4(+) + ATP = CTP + ADP + phosphate + 2 H(+). It participates in pyrimidine metabolism; CTP biosynthesis via de novo pathway; CTP from UDP: step 2/2. With respect to regulation, allosterically activated by GTP, when glutamine is the substrate; GTP has no effect on the reaction when ammonia is the substrate. The allosteric effector GTP functions by stabilizing the protein conformation that binds the tetrahedral intermediate(s) formed during glutamine hydrolysis. Inhibited by the product CTP, via allosteric rather than competitive inhibition. Catalyzes the ATP-dependent amination of UTP to CTP with either L-glutamine or ammonia as the source of nitrogen. Regulates intracellular CTP levels through interactions with the four ribonucleotide triphosphates. The sequence is that of CTP synthase from Novosphingobium aromaticivorans (strain ATCC 700278 / DSM 12444 / CCUG 56034 / CIP 105152 / NBRC 16084 / F199).